We begin with the raw amino-acid sequence, 319 residues long: Small ribosomal subunit protein RACK1 (319 aa).

Ala2 bears the N-acetylalanine mark. 7 WD repeats span residues 15–55, 63–102, 105–145, 147–191, 194–233, 235–275, and 284–319; these read GHNG…QKFG, GHSH…TYQR, GHKS…ATLL, HNDW…IEAD, GHNS…AMYT, SAQD…DDLR, and AAEP…MTAN. Residues Lys46 and Lys53 each participate in a glycyl lysine isopeptide (Lys-Gly) (interchain with G-Cter in ubiquitin) cross-link. Thr96 is modified (phosphothreonine). Glycyl lysine isopeptide (Lys-Gly) (interchain with G-Cter in ubiquitin) cross-links involve residues Lys107, Lys137, and Lys161. Thr168 is subject to Phosphothreonine.

This sequence belongs to the WD repeat G protein beta family. Ribosomal protein RACK1 subfamily. In terms of assembly, component of the small ribosomal subunit (SSU). Mature yeast ribosomes consist of a small (40S) and a large (60S) subunit. The 40S small subunit contains 1 molecule of ribosomal RNA (18S rRNA) and 33 different proteins (encoded by 57 genes). The large 60S subunit contains 3 rRNA molecules (25S, 5.8S and 5S rRNA) and 46 different proteins (encoded by 81 genes). RACK1 is located at the head of the SSU in the vicinity of the mRNA exit channel. RACK1 interacts with the mRNA-binding protein SCP16. RACK1 also exists simultaneously as a homodimer in a cytosolic non-ribosome-bound form.

The protein localises to the cytoplasm. In terms of biological role, component of the ribosome, a large ribonucleoprotein complex responsible for the synthesis of proteins in the cell. The small ribosomal subunit (SSU) binds messenger RNAs (mRNAs) and translates the encoded message by selecting cognate aminoacyl-transfer RNA (tRNA) molecules. The large subunit (LSU) contains the ribosomal catalytic site termed the peptidyl transferase center (PTC), which catalyzes the formation of peptide bonds, thereby polymerizing the amino acids delivered by tRNAs into a polypeptide chain. The nascent polypeptides leave the ribosome through a tunnel in the LSU and interact with protein factors that function in enzymatic processing, targeting, and the membrane insertion of nascent chains at the exit of the ribosomal tunnel. Located at the head of the 40S ribosomal subunit in the vicinity of the mRNA exit channel, RACK1 serves as a scaffold protein that can recruit other proteins to the ribosome. Involved in induction of the ribosome quality control (RQC) pathway; a pathway that degrades nascent peptide chains during problematic translation. Involved in the negative regulation of translation of a specific subset of proteins. The sequence is that of Small ribosomal subunit protein RACK1 from Saccharomyces cerevisiae (strain ATCC 204508 / S288c) (Baker's yeast).